We begin with the raw amino-acid sequence, 448 residues long: Hydroxycinnamoyl-CoA:piscidic acid hydroxycinnamoyltransferase (448 aa).

Active-site proton acceptor residues include histidine 153 and aspartate 395.

The protein belongs to the plant acyltransferase family. Highly expressed in root and rhizome. Expressed in senescent leaf and callus tissues. Expressed in detached leaf treated for 18 hours with ethephon, methyl jasmonate, salicylic acid or illuminated for 24 hours with UV light. Not expressed in mature leaf. Expressed at low levels in leaves and flowers.

The catalysed reaction is (2R,3S)-piscidate + (E)-4-coumaroyl-CoA = cimicifugate K + CoA. The enzyme catalyses (2R,3S)-piscidate + (E)-caffeoyl-CoA = cimicifugate D + CoA. It carries out the reaction (2R,3S)-piscidate + (E)-sinapoyl-CoA = cimicifugate J + CoA. It catalyses the reaction (2R,3S)-piscidate + (E)-feruloyl-CoA = cimicifugate E + CoA. It participates in phenylpropanoid metabolism. Catalyzes the formation of cimicifugic acids. Uses hydroxycinnamoyl-CoA thioesters as hydroxycinnamoyl donor substrates. Has a strict specificity for piscidic acid as an acceptor substrate as none of the various other acceptors tested including 4-hydroxyphenyllactic acid, malate, spermidine or tetrahydroxyhexanedioic acid are substrates. Donor substrates include 4-coumaroyl-CoA, caffeoyl-CoA, sinapoyl-CoA and feruloyl-CoA. No activity with cinnamoyl-CoA, isoferuloyl-CoA, 3,4-dimethoxycinnamoyl-CoA or 3,4-dihydroxybenzoyl-CoA as donors. In the reverse reaction with fukinolic acid and CoA as substrates, a formation of fukiic acid is evident. Hence, fukiic acid may also serve as an acceptor substrate. Involved in the biosynthesis of cimicifugic and possibly fukinolic acids. The protein is Hydroxycinnamoyl-CoA:piscidic acid hydroxycinnamoyltransferase of Actaea racemosa (Black cohosh).